Here is a 5207-residue protein sequence, read N- to C-terminus: E3 ubiquitin-protein ligase RNF213 (5207 aa).

Disordered stretches follow at residues 1–20 and 27–365; these read MECP…FCSQ and PAAP…EADV. Polar residues predominate over residues 34 to 43; it reads SENNNSTMAS. Basic residues predominate over residues 89–100; it reads KKKKRKKKKKGN. 2 stretches are compositionally biased toward low complexity: residues 101–117 and 136–157; these read KSAS…PASP and SQAQ…ATTP. The span at 188–197 shows a compositional bias: polar residues; sequence SEAQSSPQFQ. Phosphoserine is present on residues Ser-208 and Ser-217. The span at 248–266 shows a compositional bias: polar residues; the sequence is GGSSEPGTELQTTEQQAGA. 3 stretches are compositionally biased toward basic and acidic residues: residues 285 to 294, 309 to 346, and 353 to 362; these read AGKEMKEKTQ, HCQE…EGKN, and KNEKEQKNQE. Residues 343–374 are a coiled coil; the sequence is EGKNRSAAAVKNEKEQKNQEADVQEVKASTLS. Residue Lys-1151 forms a Glycyl lysine isopeptide (Lys-Gly) (interchain with G-Cter in SUMO2) linkage. Phosphoserine is present on Ser-1258. Residues 1995-2000, Glu-2098, Asp-2155, and Arg-2216 each bind ATP; that span reads GVGKSL. The residue at position 2273 (Ser-2273) is a Phosphoserine. Lys-2499 and Ser-2574 together coordinate ATP. Zn(2+) contacts are provided by Cys-3997, Cys-4000, Cys-4012, His-4014, Cys-4017, Cys-4020, Cys-4032, Cys-4035, Cys-4505, and His-4509. Residues 3997–4036 form an RING-type zinc finger; sequence CSICLGDAKDPVCLPCDHVHCLRCLRAWFASEQMICPYCL. The segment at 4483 to 4555 adopts an RZ-type zinc-finger fold; it reads MPEDLLAQAR…VKDKADRTQT (73 aa). The active-site Nucleophile; for E3 ubiquitin-lipopolysaccharide ligase activity is Cys-4516. The Zn(2+) site is built by Cys-4525 and Cys-4528.

This sequence belongs to the AAA ATPase family. In terms of assembly, monomer. Interacts with UBE2L3/UBCH7; UBE2L3/UBCH7 is the most efficient ubiquitin-conjugating enzyme E2 for the ubiquitin ligase activity. Interacts with UBE2N/UBC13; promoting 'Lys-63'-linked ubiquitination of target proteins. As to quaternary structure, (Microbial infection) Interacts with M.tuberculosis protein Rv3655c, which impairs caspase-8 activation and suppresses macrophage apoptosis by blocking the extrinsic pathway. Autoubiquitinated. As to expression, widely expressed (at protein level). Major isoform detected in all tissues examined. In terms of tissue distribution, minor isoform with restricted expression.

It localises to the cytoplasm. Its subcellular location is the cytosol. The protein localises to the lipid droplet. The catalysed reaction is S-ubiquitinyl-[E2 ubiquitin-conjugating enzyme]-L-cysteine + [acceptor protein]-L-lysine = [E2 ubiquitin-conjugating enzyme]-L-cysteine + N(6)-ubiquitinyl-[acceptor protein]-L-lysine.. The enzyme catalyses ATP + H2O = ADP + phosphate + H(+). The protein operates within protein modification; protein ubiquitination. Atypical E3 ubiquitin ligase that can catalyze ubiquitination of both proteins and lipids, and which is involved in various processes, such as lipid metabolism, angiogenesis and cell-autonomous immunity. Acts as a key immune sensor by catalyzing ubiquitination of the lipid A moiety of bacterial lipopolysaccharide (LPS) via its RZ-type zinc-finger: restricts the proliferation of cytosolic bacteria, such as Salmonella, by generating the bacterial ubiquitin coat through the ubiquitination of LPS. Also acts indirectly by mediating the recruitment of the LUBAC complex, which conjugates linear polyubiquitin chains. Ubiquitination of LPS triggers cell-autonomous immunity, such as antibacterial autophagy, leading to degradation of the microbial invader. Involved in lipid metabolism by regulating fat storage and lipid droplet formation; act by inhibiting the lipolytic process. Also regulates lipotoxicity by inhibiting desaturation of fatty acids. Also acts as an E3 ubiquitin-protein ligase via its RING-type zinc finger: mediates 'Lys-63'-linked ubiquitination of target proteins. Involved in the non-canonical Wnt signaling pathway in vascular development: acts by mediating ubiquitination and degradation of FLNA and NFATC2 downstream of RSPO3, leading to inhibit the non-canonical Wnt signaling pathway and promoting vessel regression. Also has ATPase activity; ATPase activity is required for ubiquitination of LPS. This Homo sapiens (Human) protein is E3 ubiquitin-protein ligase RNF213.